The sequence spans 877 residues: Alanine--tRNA ligase (877 aa).

Residues His-567, His-571, Cys-669, and His-673 each contribute to the Zn(2+) site.

The protein belongs to the class-II aminoacyl-tRNA synthetase family. Zn(2+) serves as cofactor.

Its subcellular location is the cytoplasm. The enzyme catalyses tRNA(Ala) + L-alanine + ATP = L-alanyl-tRNA(Ala) + AMP + diphosphate. Catalyzes the attachment of alanine to tRNA(Ala) in a two-step reaction: alanine is first activated by ATP to form Ala-AMP and then transferred to the acceptor end of tRNA(Ala). Also edits incorrectly charged Ser-tRNA(Ala) and Gly-tRNA(Ala) via its editing domain. This chain is Alanine--tRNA ligase, found in Rickettsia prowazekii (strain Madrid E).